Here is a 187-residue protein sequence, read N- to C-terminus: MESLQNHFLIAMPSLDDTFFERTVIYLCEHDEKGAMGLVINKPLGIEVNSLLEQMDLPAEQVSTDLALGAQVLMGGPVSQDRGFVLHTSQPYWANSTELSSGLMLTTSRDVLTAIGSERSPEKFIVALGYAGWSKNQLEQELADNSWLTIPADQALLFDVKHEDRWQQASRALGFDAWQLSSQAGHA.

It belongs to the UPF0301 (AlgH) family.

The protein is UPF0301 protein Shewmr7_1270 of Shewanella sp. (strain MR-7).